We begin with the raw amino-acid sequence, 405 residues long: Cytoplasmic tRNA 2-thiolation protein 2 (405 aa).

Belongs to the CTU2/NCS2 family.

The protein localises to the cytoplasm. It functions in the pathway tRNA modification; 5-methoxycarbonylmethyl-2-thiouridine-tRNA biosynthesis. In terms of biological role, plays a central role in 2-thiolation of mcm(5)S(2)U at tRNA wobble positions of tRNA(Lys), tRNA(Glu) and tRNA(Gln). May act by forming a heterodimer with NCS6/CTU1 that ligates sulfur from thiocarboxylated URM1 onto the uridine of tRNAs at wobble position. In Drosophila persimilis (Fruit fly), this protein is Cytoplasmic tRNA 2-thiolation protein 2.